The primary structure comprises 164 residues: Putative pre-16S rRNA nuclease (164 aa).

It belongs to the YqgF nuclease family.

The protein localises to the cytoplasm. Functionally, could be a nuclease involved in processing of the 5'-end of pre-16S rRNA. The polypeptide is Putative pre-16S rRNA nuclease (Rhizobium etli (strain CIAT 652)).